Consider the following 193-residue polypeptide: CASP-like protein 1D1 (193 aa).

The segment at 1–24 (MGYETKSTLDTERSTAPGTGTTTK) is disordered. Over 1-30 (MGYETKSTLDTERSTAPGTGTTTKSCSMTQ) the chain is Cytoplasmic. The segment covering 14-24 (STAPGTGTTTK) has biased composition (polar residues). A helical membrane pass occupies residues 31-51 (VVLRFVLFAATLTSIVVMVTS). The Extracellular portion of the chain corresponds to 52-76 (KQTKNIFLPGTPIRIPAAEFTNSPA). The helical transmembrane segment at 77–97 (LIYFVVALSVACFYSIVSTFV) threads the bilayer. The Cytoplasmic segment spans residues 98 to 108 (TVSAFKKHSCS). The chain crosses the membrane as a helical span at residues 109–129 (AVLLLNLAIMDAVMVGIVASA). Residues 130-162 (TGAGGGVAYLGLKGNKEVRWGKICHIYDKFCRH) lie on the Extracellular side of the membrane. The chain crosses the membrane as a helical span at residues 163 to 183 (VGGAIAVSLFASVVLLLLSII). Topologically, residues 184–193 (SVLSLYKKIR) are cytoplasmic.

The protein belongs to the Casparian strip membrane proteins (CASP) family. Homodimer and heterodimers.

It is found in the cell membrane. In Arabidopsis thaliana (Mouse-ear cress), this protein is CASP-like protein 1D1.